We begin with the raw amino-acid sequence, 512 residues long: Cytochrome P450 1A1 (512 aa).

The tract at residues 29-40 (SRPQVPKGLKNP) is mitochondrial targeting signal. The O-linked (GlcNAc) serine glycan is linked to serine 67. Phenylalanine 224 is a binding site for substrate. A heme-binding site is contributed by cysteine 457.

Belongs to the cytochrome P450 family. Interacts with cytosolic chaperones HSP70 and HSP90; this interaction is required for initial targeting to mitochondria. Interacts (via mitochondrial targeting signal) with TOMM40 (via N-terminus); this interaction is required for translocation across the mitochondrial outer membrane. Heme serves as cofactor. As to expression, lung, lymphocytes and placenta.

The protein localises to the endoplasmic reticulum membrane. The protein resides in the mitochondrion inner membrane. It is found in the microsome membrane. It localises to the cytoplasm. The enzyme catalyses an organic molecule + reduced [NADPH--hemoprotein reductase] + O2 = an alcohol + oxidized [NADPH--hemoprotein reductase] + H2O + H(+). The catalysed reaction is estrone + reduced [NADPH--hemoprotein reductase] + O2 = 2-hydroxyestrone + oxidized [NADPH--hemoprotein reductase] + H2O + H(+). It catalyses the reaction estrone + reduced [NADPH--hemoprotein reductase] + O2 = 4-hydroxyestrone + oxidized [NADPH--hemoprotein reductase] + H2O + H(+). It carries out the reaction estrone + reduced [NADPH--hemoprotein reductase] + O2 = 6alpha-hydroxyestrone + oxidized [NADPH--hemoprotein reductase] + H2O + H(+). The enzyme catalyses estrone + reduced [NADPH--hemoprotein reductase] + O2 = 15alpha-hydroxyestrone + oxidized [NADPH--hemoprotein reductase] + H2O + H(+). The catalysed reaction is estrone + reduced [NADPH--hemoprotein reductase] + O2 = 16alpha-hydroxyestrone + oxidized [NADPH--hemoprotein reductase] + H2O + H(+). It catalyses the reaction 17beta-estradiol + reduced [NADPH--hemoprotein reductase] + O2 = 2-hydroxy-17beta-estradiol + oxidized [NADPH--hemoprotein reductase] + H2O + H(+). It carries out the reaction 17beta-estradiol + reduced [NADPH--hemoprotein reductase] + O2 = 4-hydroxy-17beta-estradiol + oxidized [NADPH--hemoprotein reductase] + H2O + H(+). The enzyme catalyses 17beta-estradiol + reduced [NADPH--hemoprotein reductase] + O2 = 6alpha-hydroxy-17beta-estradiol + oxidized [NADPH--hemoprotein reductase] + H2O + H(+). The catalysed reaction is 17beta-estradiol + reduced [NADPH--hemoprotein reductase] + O2 = 7alpha-hydroxy-17beta-estradiol + oxidized [NADPH--hemoprotein reductase] + H2O + H(+). It catalyses the reaction 17beta-estradiol + reduced [NADPH--hemoprotein reductase] + O2 = 15alpha-hydroxy-17beta-estradiol + oxidized [NADPH--hemoprotein reductase] + H2O + H(+). It carries out the reaction (5Z,8Z,11Z)-eicosatrienoate + reduced [NADPH--hemoprotein reductase] + O2 = 19-hydroxy-(5Z,8Z,11Z)-eicosatrienoate + oxidized [NADPH--hemoprotein reductase] + H2O + H(+). The enzyme catalyses (5Z,8Z,11Z,14Z)-eicosatetraenoate + reduced [NADPH--hemoprotein reductase] + O2 = 16-hydroxy-(5Z,8Z,11Z,14Z)-eicosatetraenoate + oxidized [NADPH--hemoprotein reductase] + H2O + H(+). The catalysed reaction is (5Z,8Z,11Z,14Z)-eicosatetraenoate + reduced [NADPH--hemoprotein reductase] + O2 = 17-hydroxy-(5Z,8Z,11Z,14Z)-eicosatetraenoate + oxidized [NADPH--hemoprotein reductase] + H2O + H(+). It catalyses the reaction (5Z,8Z,11Z,14Z)-eicosatetraenoate + reduced [NADPH--hemoprotein reductase] + O2 = 18-hydroxy-(5Z,8Z,11Z,14Z)-eicosatetraenoate + oxidized [NADPH--hemoprotein reductase] + H2O + H(+). It carries out the reaction (5Z,8Z,11Z,14Z)-eicosatetraenoate + reduced [NADPH--hemoprotein reductase] + O2 = 19-hydroxy-(5Z,8Z,11Z,14Z)-eicosatetraenoate + oxidized [NADPH--hemoprotein reductase] + H2O + H(+). The enzyme catalyses (5Z,8Z,11Z,14Z,17Z)-eicosapentaenoate + reduced [NADPH--hemoprotein reductase] + O2 = 19-hydroxy-(5Z,8Z,11Z,14Z,17Z)-eicosapentaenoate + oxidized [NADPH--hemoprotein reductase] + H2O + H(+). The catalysed reaction is (5Z,8Z,11Z,14Z)-eicosatetraenoate + reduced [NADPH--hemoprotein reductase] + O2 = (8R,9S)-epoxy-(5Z,11Z,14Z)-eicosatrienoate + oxidized [NADPH--hemoprotein reductase] + H2O + H(+). It catalyses the reaction (5Z,8Z,11Z,14Z)-eicosatetraenoate + reduced [NADPH--hemoprotein reductase] + O2 = (11R,12S)-epoxy-(5Z,8Z,14Z)-eicosatrienoate + oxidized [NADPH--hemoprotein reductase] + H2O + H(+). It carries out the reaction (5Z,8Z,11Z,14Z)-eicosatetraenoate + reduced [NADPH--hemoprotein reductase] + O2 = (14S,15R)-epoxy-(5Z,8Z,11Z)-eicosatrienoate + oxidized [NADPH--hemoprotein reductase] + H2O + H(+). The enzyme catalyses (5Z,8Z,11Z,14Z)-eicosatetraenoate + reduced [NADPH--hemoprotein reductase] + O2 = (14R,15S)-epoxy-(5Z,8Z,11Z)-eicosatrienoate + oxidized [NADPH--hemoprotein reductase] + H2O + H(+). The catalysed reaction is (5Z,8Z,11Z,14Z,17Z)-eicosapentaenoate + reduced [NADPH--hemoprotein reductase] + O2 = (17R,18S)-epoxy-(5Z,8Z,11Z,14Z)-eicosatetraenoate + oxidized [NADPH--hemoprotein reductase] + H2O + H(+). It catalyses the reaction (4Z,7Z,10Z,13Z,16Z,19Z)-docosahexaenoate + reduced [NADPH--hemoprotein reductase] + O2 = (19S,20R)-epoxy-(4Z,7Z,10Z,13Z,16Z)-docosapentaenoate + oxidized [NADPH--hemoprotein reductase] + H2O + H(+). It carries out the reaction (4Z,7Z,10Z,13Z,16Z,19Z)-docosahexaenoate + reduced [NADPH--hemoprotein reductase] + O2 = (19R,20S)-epoxy-(4Z,7Z,10Z,13Z,16Z)-docosapentaenoate + oxidized [NADPH--hemoprotein reductase] + H2O + H(+). The enzyme catalyses all-trans-retinol + reduced [NADPH--hemoprotein reductase] + O2 = all-trans-retinal + oxidized [NADPH--hemoprotein reductase] + 2 H2O + H(+). The catalysed reaction is all-trans-retinal + reduced [NADPH--hemoprotein reductase] + O2 = all-trans-retinoate + oxidized [NADPH--hemoprotein reductase] + H2O + 2 H(+). It catalyses the reaction (13S)-hydroperoxy-(9Z,11E)-octadecadienoate = 13-oxo-(9Z,11E)-octadecadienoate + H2O. It carries out the reaction (12S)-hydroperoxy-(5Z,8Z,10E,14Z)-eicosatetraenoate = 12-oxo-(5Z,8Z,10E,14Z)-eicosatetraenoate + H2O. The enzyme catalyses (15S)-hydroperoxy-(5Z,8Z,11Z,13E)-eicosatetraenoate = 15-oxo-(5Z,8Z,11Z,13E)-eicosatetraenoate + H2O. The catalysed reaction is (5S)-hydroperoxy-(6E,8Z,11Z,14Z)-eicosatetraenoate = 5-oxo-(6E,8Z,11Z,14Z)-eicosatetraenoate + H2O. It participates in steroid hormone biosynthesis. Its pathway is lipid metabolism; fatty acid metabolism. It functions in the pathway cofactor metabolism; retinol metabolism. Its function is as follows. A cytochrome P450 monooxygenase involved in the metabolism of various endogenous substrates, including fatty acids, steroid hormones and vitamins. Mechanistically, uses molecular oxygen inserting one oxygen atom into a substrate, and reducing the second into a water molecule, with two electrons provided by NADPH via cytochrome P450 reductase (NADPH--hemoprotein reductase). Catalyzes the hydroxylation of carbon-hydrogen bonds. Exhibits high catalytic activity for the formation of hydroxyestrogens from estrone (E1) and 17beta-estradiol (E2), namely 2-hydroxy E1 and E2, as well as D-ring hydroxylated E1 and E2 at the C15-alpha and C16-alpha positions. Displays different regioselectivities for polyunsaturated fatty acids (PUFA) hydroxylation. Catalyzes the epoxidation of double bonds of certain PUFA. Converts arachidonic acid toward epoxyeicosatrienoic acid (EET) regioisomers, 8,9-, 11,12-, and 14,15-EET, that function as lipid mediators in the vascular system. Displays an absolute stereoselectivity in the epoxidation of eicosapentaenoic acid (EPA) producing the 17(R),18(S) enantiomer. May play an important role in all-trans retinoic acid biosynthesis in extrahepatic tissues. Catalyzes two successive oxidative transformation of all-trans retinol to all-trans retinal and then to the active form all-trans retinoic acid. May also participate in eicosanoids metabolism by converting hydroperoxide species into oxo metabolites (lipoxygenase-like reaction, NADPH-independent). This is Cytochrome P450 1A1 from Homo sapiens (Human).